Reading from the N-terminus, the 533-residue chain is Flavin-dependent halogenase armH4 (533 aa).

Residues Gly16, Ala19, and Glu49 each coordinate FAD. Residues Ser337 and Gly338 each coordinate chloride. Val339 serves as a coordination point for FAD.

It belongs to the flavin-dependent halogenase family.

The enzyme catalyses melleolide F + FADH2 + chloride + O2 = 6'-chloromelleolide F + FAD + 2 H2O + H(+). It carries out the reaction melleolide F + bromide + FADH2 + O2 = 6'-bromomelleolide F + FAD + 2 H2O. Flavin-dependent halogenase involved in the biosynthesis of melleolides, a range of antifungal and phytotoxic polyketide derivatives composed of an orsellinic acid (OA) moiety esterified to various sesquiterpene alcohols. The halogenase catalyzes the transfer of a single chlorine atom to the melleolide backbone, resulting in a 6'-chloromelleolide product. The enzyme acts on free substrate and does not depend on carrier-protein-dependent acceptor molecules. Can also catalyze the transfer of a single bromine atom to the melleolide backbone in vitro. This Armillaria mellea (Honey mushroom) protein is Flavin-dependent halogenase armH4.